A 556-amino-acid polypeptide reads, in one-letter code: Glutamine--tRNA ligase (556 aa).

The short motif at 33-43 (PEPNGYLHIGH) is the 'HIGH' region element. ATP-binding positions include 34–36 (EPN) and 40–46 (HIGHAKS). L-glutamine is bound by residues Asp-66 and Tyr-210. Residues Thr-229, 259 to 260 (RL), and 267 to 269 (MSK) contribute to the ATP site. Positions 266 to 270 (VMSKR) match the 'KMSKS' region motif.

Belongs to the class-I aminoacyl-tRNA synthetase family. As to quaternary structure, monomer.

The protein localises to the cytoplasm. It catalyses the reaction tRNA(Gln) + L-glutamine + ATP = L-glutaminyl-tRNA(Gln) + AMP + diphosphate. This chain is Glutamine--tRNA ligase, found in Clostridium kluyveri (strain ATCC 8527 / DSM 555 / NBRC 12016 / NCIMB 10680 / K1).